The following is a 469-amino-acid chain: Trigger factor (469 aa).

In terms of domain architecture, PPIase FKBP-type spans 165–250 (GDRVTIDYIG…VKAVCKSDEL (86 aa)). Basic and acidic residues predominate over residues 444–460 (DLTEKKPLKKKTAEKVS). The segment at 444–469 (DLTEKKPLKKKTAEKVSTKKKAPKKS) is disordered.

Belongs to the FKBP-type PPIase family. Tig subfamily.

Its subcellular location is the cytoplasm. The enzyme catalyses [protein]-peptidylproline (omega=180) = [protein]-peptidylproline (omega=0). Its function is as follows. Involved in protein export. Acts as a chaperone by maintaining the newly synthesized protein in an open conformation. Functions as a peptidyl-prolyl cis-trans isomerase. The chain is Trigger factor from Bartonella henselae (strain ATCC 49882 / DSM 28221 / CCUG 30454 / Houston 1) (Rochalimaea henselae).